Reading from the N-terminus, the 605-residue chain is MAHSQVAYLIPLKADLKEDNSSPRITLSEGPNIIGRGNVSIVDKRLSRKHITIIVSTSGSASLSVDGTNPVVIRSSGDGERKKVKPSEEVSVCNDDLIELIPGHHFFKLVLLNGRAAKKARKAEDDVEAIRRFCPPNEKLPSTFRLLSVDALPDWANTSCVSINDVIEGDVVAAILSNYMVDIDWLMSACPKLANIPQVMVIHGEGDGRQEYIQRKKPANWILHKPRLPISFGTHHSKAIFLVYPRGVRVVVHTANLIHVDWNNKSQGLWMQDFPWKDDDKDPPKGCGFEGDLIDYLNVLKWPEFTANLPGRGNVKINAAFFKKFDYSDATVRLIASVPGYHTGFNLNKWGHMKLRTILQECIFDREFRRSPLIYQFSSLGSLDEKWLAEFGNSLSSGITEDKTPLGPGDSLIIWPTVEDVRCSLEGYAAGNAIPSPLKNVEKPFLKKYWARWKADHSARGRAMPHIKTFTRYNDQKIAWFLLTSSNLSKAAWGALQKNNSQLMIRSYELGVLFLPSPIKTQGCVFSCTESNPSVMKAKQETKDEVEKRSKLVTMTWQGDRDLPEIISLPVPYQLPPKPYSPEDVPWSWDRGYSKKDVYGQVWPR.

Residues 81 to 86 (RKKVKP) carry the Nuclear localization signal motif. His236 functions as the Nucleophile in the catalytic mechanism. Residue Lys238 coordinates substrate. The segment at 379 to 382 (SLGS) is interaction with DNA. The Proton donor/acceptor role is filled by His466. Lys468 is a substrate binding site.

It belongs to the tyrosyl-DNA phosphodiesterase family. As to expression, ubiquitous, with a low level in roots.

It is found in the nucleus. Inhibited by vanadate analogs. In terms of biological role, DNA repair enzyme that can remove a variety of covalent adducts from DNA through hydrolysis of a 3'-phosphodiester bond, giving rise to DNA with a free 3' phosphate. Catalyzes the hydrolysis of dead-end complexes between DNA and the topoisomerase I active site tyrosine residue. The chain is Tyrosyl-DNA phosphodiesterase 1 from Arabidopsis thaliana (Mouse-ear cress).